The sequence spans 259 residues: ATP synthase subunit a (259 aa).

The propeptide at 1–7 is removed in mature form; that stretch reads MTNNYIN. Helical transmembrane passes span 36–56, 95–115, 125–145, 164–206, and 211–253; these read FSLY…LSIG, YVPL…IGMV, LIYI…LGLF, LVPV…NLVK, and INYF…SYLK.

F-type ATP synthases have 2 components, the catalytic core F(1) and the membrane-embedded component F(0), linked together by a central stalk and a peripheral stalk. The central stalk, also called rotor shaft, is often seen as part of F(1). The peripheral stalk is seen as part of F(0). F(0) contains the membrane channel next to the rotor. F-type ATP synthases form dimers but each monomer functions independently in ATP generation. The dimer consists of 18 different polypeptides: ATP1 (subunit alpha, part of F(1), 3 molecules per monomer), ATP2 (subunit beta, part of F(1), 3 molecules per monomer), ATP3 (subunit gamma, part of the central stalk), ATP4 (subunit b, part of the peripheral stalk), ATP5/OSCP (subunit 5/OSCP, part of the peripheral stalk), ATP6 (subunit a, part of the peripheral stalk), ATP7 (subunit d, part of the peripheral stalk), ATP8 (subunit 8, part of the peripheral stalk), OLI1 (subunit c, part of the rotor, 10 molecules per monomer), ATP14 (subunit h, part of the peripheral stalk), ATP15 (subunit epsilon, part of the central stalk), ATP16 (subunit delta, part of the central stalk), ATP17 (subunit f, part of the peripheral stalk), ATP18 (subunit i/j, part of the peripheral stalk). Dimer-specific subunits are ATP19 (subunit k, at interface between monomers), ATP20 (subunit g, at interface between monomers), TIM11 (subunit e, at interface between monomers). Also contains subunit L.

It is found in the mitochondrion inner membrane. Its function is as follows. Mitochondrial membrane ATP synthase (F(1)F(0) ATP synthase or Complex V) produces ATP from ADP in the presence of a proton gradient across the membrane which is generated by electron transport complexes of the respiratory chain. F-type ATP synthases consist of two structural domains, F(1) - containing the extramembraneous catalytic core, and F(0) - containing the membrane proton channel, linked together by a central stalk and a peripheral stalk. During catalysis, ATP synthesis in the catalytic domain of F(1) is coupled via a rotary mechanism of the central stalk subunits to proton translocation. Key component of the proton channel; it may play a direct role in the translocation of protons across the membrane. The polypeptide is ATP synthase subunit a (Pichia angusta (Yeast)).